A 529-amino-acid polypeptide reads, in one-letter code: uncharacterized protein (529 aa).

Over residues Met1–Glu11 the composition is skewed to basic and acidic residues. Disordered regions lie at residues Met1–Ser222, Pro237–Val256, Ala271–Pro372, and Gly393–Thr488. Over residues Met27 to Pro40 the composition is skewed to polar residues. The segment covering Thr83–Pro95 has biased composition (basic residues). Over residues Asn110–Ala125 the composition is skewed to polar residues. Ser128 is subject to Phosphoserine. A compositionally biased stretch (polar residues) spans Thr170–Gly199. Phosphoserine is present on Ser217. A compositionally biased stretch (polar residues) spans Pro237–Glu249. The segment covering Ser321–Ala334 has biased composition (low complexity). The span at Asp336 to Ile362 shows a compositional bias: polar residues. The segment covering Glu409–Ala426 has biased composition (basic and acidic residues). Positions Ala430–Arg455 are enriched in polar residues. Residues Ser456–Ser470 are compositionally biased toward low complexity. The segment covering Ile471–Thr488 has biased composition (polar residues).

It localises to the cytoplasm. This is an uncharacterized protein from Schizosaccharomyces pombe (strain 972 / ATCC 24843) (Fission yeast).